The sequence spans 54 residues: Photoreceptor disk component PRCD (54 aa).

The S-palmitoyl cysteine moiety is linked to residue Cys2. A disordered region spans residues 24-54; it reads QPEPSGADGAVVGSRSERDLQSSGRKEEPLK. Positions 38–54 are enriched in basic and acidic residues; the sequence is RSERDLQSSGRKEEPLK.

It belongs to the PRCD family. Interacts with RHO/rhodopsin; the interaction promotes PRCD stability. Post-translationally, palmitoylated at Cys-2. Palmitoylation is essential for protein stability and trafficking to the photoreceptor outer segment, but does not appear to be essential for membrane localization. Probably palmitoylated by ZDHHC3. Phosphorylated. As to expression, expressed in retina.

The protein localises to the cell projection. It is found in the cilium. Its subcellular location is the photoreceptor outer segment. It localises to the membrane. The protein resides in the endoplasmic reticulum. The protein localises to the golgi apparatus. Functionally, involved in vision. This is Photoreceptor disk component PRCD from Canis lupus familiaris (Dog).